A 933-amino-acid polypeptide reads, in one-letter code: Melanoma-associated antigen E1 (933 aa).

Disordered stretches follow at residues 1–113, 149–236, 256–282, and 360–393; these read MSLV…VSAG, GASI…GINL, SDIS…VQST, and TSGL…EDEN. Over residues 8–23 the composition is skewed to basic residues; the sequence is SRRRRGGRANGRKNSG. Polar residues-rich tracts occupy residues 64–97, 149–166, 173–184, and 219–236; these read GGSS…QLPT, GASI…NVQP, GTSVPPTFSEES, and APST…GINL. 2 MAGE domains span residues 467–666 and 721–912; these read MEQN…YNEA and LESK…YREA. The interaction with DTNA stretch occupies residues 719-933; that stretch reads SRLESKSRKL…RRPLVVRNLR (215 aa).

In terms of assembly, interacts with DTNA. Interacts with TRIM28.

Its subcellular location is the cytoplasm. The protein localises to the perinuclear region. It is found in the nucleus. The protein resides in the cell membrane. May enhance ubiquitin ligase activity of RING-type zinc finger-containing E3 ubiquitin-protein ligases. Proposed to act through recruitment and/or stabilization of the Ubl-conjugating enzyme (E2) at the E3:substrate complex. The sequence is that of Melanoma-associated antigen E1 (Magee1) from Rattus norvegicus (Rat).